Consider the following 170-residue polypeptide: Small ribosomal subunit protein uS13 (170 aa).

Positions 128-140 are enriched in basic residues; it reads VRHKRGQKVRGQR. Residues 128-170 form a disordered region; the sequence is VRHKRGQKVRGQRTKSTGRTEGTIGVNVEAIKEEQAEDGGDEE.

The protein belongs to the universal ribosomal protein uS13 family. Part of the 30S ribosomal subunit. Forms a loose heterodimer with protein S19. Forms two bridges to the 50S subunit in the 70S ribosome.

Functionally, located at the top of the head of the 30S subunit, it contacts several helices of the 16S rRNA. In the 70S ribosome it contacts the 23S rRNA (bridge B1a) and protein L5 of the 50S subunit (bridge B1b), connecting the 2 subunits; these bridges are implicated in subunit movement. The sequence is that of Small ribosomal subunit protein uS13 from Natronomonas pharaonis (strain ATCC 35678 / DSM 2160 / CIP 103997 / JCM 8858 / NBRC 14720 / NCIMB 2260 / Gabara) (Halobacterium pharaonis).